The sequence spans 210 residues: 3-hydroxy-3-methylglutaryl-coenzyme A reductase 2 (210 aa).

Catalysis depends on charge relay system residues Lys-21 and Asp-97. A helical transmembrane segment spans residues 166 to 186; that stretch reads LLATIVAGSVLAGELSLMSAI. Residue His-195 is the Proton donor of the active site. N-linked (GlcNAc...) asparagine glycosylation occurs at Asn-199.

Belongs to the HMG-CoA reductase family.

It localises to the endoplasmic reticulum membrane. The protein localises to the mitochondrion membrane. It is found in the plastid membrane. It catalyses the reaction (R)-mevalonate + 2 NADP(+) + CoA = (3S)-3-hydroxy-3-methylglutaryl-CoA + 2 NADPH + 2 H(+). It participates in metabolic intermediate biosynthesis; (R)-mevalonate biosynthesis; (R)-mevalonate from acetyl-CoA: step 3/3. Its function is as follows. Catalyzes the synthesis of mevalonate. The specific precursor of all isoprenoid compounds present in plants. This is 3-hydroxy-3-methylglutaryl-coenzyme A reductase 2 (HMGR2) from Hevea brasiliensis (Para rubber tree).